The chain runs to 588 residues: Adenine deaminase (588 aa).

Belongs to the metallo-dependent hydrolases superfamily. Adenine deaminase family. As to quaternary structure, homodimer. Mn(2+) is required as a cofactor.

The enzyme catalyses adenine + H2O + H(+) = hypoxanthine + NH4(+). This is Adenine deaminase from Escherichia coli O7:K1 (strain IAI39 / ExPEC).